The sequence spans 790 residues: Kinesin-like protein KIN-14D (790 aa).

Disordered regions lie at residues 1–56 and 116–139; these read MPLR…DVGS and DKENLSSSLQSAEKRYSDKELDAK. A globular region spans residues 1-66; sequence MPLRNQNRAP…TEECGKVEFT (66 aa). Residues 16 to 33 are compositionally biased toward basic and acidic residues; it reads VKKEALSSIPFDKRRKET. Residues 34-55 are compositionally biased toward polar residues; that stretch reads QGTGRRQVLSTVNRQDANSDVG. Coiled-coil stretches lie at residues 117–316 and 347–426; these read KENL…HVVQ and SLEE…LELK. A compositionally biased stretch (basic and acidic residues) spans 127-139; the sequence is AEKRYSDKELDAK. The Kinesin motor domain maps to 428–769; it reads NIRVFCRVRP…LRFAARVNAC (342 aa). 513 to 520 is an ATP binding site; it reads GQTGSGKT.

The protein belongs to the TRAFAC class myosin-kinesin ATPase superfamily. Kinesin family. KIN-14 subfamily. Slightly expressed in anther lobes with pollen mother cells at anther stage 5. Strongly expressed at anther stage 6 in the tapetum and meiotic cells. Also detected in the gynoecium and the ovule.

It localises to the cytoplasm. It is found in the cytoskeleton. Its subcellular location is the phragmoplast. Functionally, kinesin that supports microtubule movement in an ATP-dependent manner and that functions as a minus-end directed motor as well as a plus-end tracking protein. During mitosis, is involved in early spindle assembly. Participates in the capture of antiparallel interpolar microtubules and helps in generating force to coalign microtubules. This chain is Kinesin-like protein KIN-14D, found in Arabidopsis thaliana (Mouse-ear cress).